Here is a 72-residue protein sequence, read N- to C-terminus: Cytochrome b-c1 complex subunit 8-2, mitochondrial (72 aa).

Over 1–41 (MGKQPVKLKAVVYALSPFQQKIMTGLWKDLPEKIHHKVSEN) the chain is Mitochondrial matrix. The helical transmembrane segment at 42–58 (WISTILLVAPVVGTYSY) threads the bilayer. Over 59–72 (AQYFKEQEKLEHRF) the chain is Mitochondrial intermembrane.

The protein belongs to the UQCRQ/QCR8 family. Component of the ubiquinol-cytochrome c oxidoreductase (cytochrome b-c1 complex, complex III, CIII), a multisubunit enzyme composed of 10 subunits. The complex is composed of 3 respiratory subunits cytochrome b (MT-CYB), cytochrome c1 (CYC1-1 or CYC1-2) and Rieske protein (UCR1-1 or UCR1-2), 2 core protein subunits MPPalpha1 (or MPPalpha2) and MPPB, and 5 low-molecular weight protein subunits QCR7-1 (or QCR7-2), UCRQ-1 (or UCRQ-2), QCR9, UCRY and probably QCR6-1 (or QCR6-2). The complex exists as an obligatory dimer and forms supercomplexes (SCs) in the inner mitochondrial membrane with NADH-ubiquinone oxidoreductase (complex I, CI), resulting in different assemblies (supercomplexes SCI(1)III(2) and SCI(2)III(4)).

It localises to the mitochondrion inner membrane. Functionally, component of the ubiquinol-cytochrome c oxidoreductase, a multisubunit transmembrane complex that is part of the mitochondrial electron transport chain which drives oxidative phosphorylation. The respiratory chain contains 3 multisubunit complexes succinate dehydrogenase (complex II, CII), ubiquinol-cytochrome c oxidoreductase (cytochrome b-c1 complex, complex III, CIII) and cytochrome c oxidase (complex IV, CIV), that cooperate to transfer electrons derived from NADH and succinate to molecular oxygen, creating an electrochemical gradient over the inner membrane that drives transmembrane transport and the ATP synthase. The cytochrome b-c1 complex catalyzes electron transfer from ubiquinol to cytochrome c, linking this redox reaction to translocation of protons across the mitochondrial inner membrane, with protons being carried across the membrane as hydrogens on the quinol. In the process called Q cycle, 2 protons are consumed from the matrix, 4 protons are released into the intermembrane space and 2 electrons are passed to cytochrome c. The protein is Cytochrome b-c1 complex subunit 8-2, mitochondrial (UCRQ-2) of Arabidopsis thaliana (Mouse-ear cress).